A 315-amino-acid polypeptide reads, in one-letter code: Glutathione synthetase (315 aa).

Residues 125–310 form the ATP-grasp domain; sequence KLYTAWFADL…ITGMLMDAIE (186 aa). 151–207 contributes to the ATP binding site; sequence WEKHGDIIMKPLDGMGGASIFRVKEGDPNIGVIAETLTELGNRYCMAQNYLPAIKDG. Residues glutamate 281 and asparagine 283 each contribute to the Mg(2+) site.

Belongs to the prokaryotic GSH synthase family. Requires Mg(2+) as cofactor. The cofactor is Mn(2+).

The catalysed reaction is gamma-L-glutamyl-L-cysteine + glycine + ATP = glutathione + ADP + phosphate + H(+). It functions in the pathway sulfur metabolism; glutathione biosynthesis; glutathione from L-cysteine and L-glutamate: step 2/2. This Salmonella typhimurium (strain LT2 / SGSC1412 / ATCC 700720) protein is Glutathione synthetase.